The sequence spans 290 residues: 6-carboxyhexanoate--CoA ligase (290 aa).

This sequence belongs to the BioW family. In terms of assembly, homodimer. Mg(2+) serves as cofactor.

It carries out the reaction heptanedioate + ATP + CoA = 6-carboxyhexanoyl-CoA + AMP + diphosphate. The protein operates within metabolic intermediate metabolism; pimeloyl-CoA biosynthesis; pimeloyl-CoA from pimelate: step 1/1. Catalyzes the transformation of pimelate into pimeloyl-CoA with concomitant hydrolysis of ATP to AMP. This chain is 6-carboxyhexanoate--CoA ligase, found in Bacillus amyloliquefaciens (Bacillus velezensis).